The primary structure comprises 538 residues: Syncytin-2 (538 aa).

Positions 1–15 (MGLLLLVLILTPLLA) are cleaved as a signal peptide. The Extracellular segment spans residues 31–478 (LLQSTGSPYS…GWLNWEGTWK (448 aa)). The short motif at 43-46 (CWLC) is the CXXC element. 3 disulfide bridges follow: Cys-43–Cys-46, Cys-43–Cys-439, and Cys-431–Cys-438. N-linked (GlcNAc...) asparagine glycosylation is found at Asn-133, Asn-146, Asn-177, Asn-220, Asn-241, Asn-247, Asn-312, and Asn-332. A fusion peptide region spans residues 354 to 374 (FIPLLAGLGILAGTGTGIAGI). A CKS-17 motif is present at residues 414 to 430 (LQNRRGLDMLTAAQGGI). Positions 431-439 (CLALDEKCC) match the CX6CC motif. N-linked (GlcNAc...) asparagine glycosylation is present at Asn-443. The helical transmembrane segment at 479 to 499 (WFSWVLPFIGPFVSLLLLLLF) threads the bilayer. At 500 to 538 (GPCLLNLITQFVSSRLQAIKLQTNLSAGRRPRTIQESPF) the chain is on the cytoplasmic side.

This sequence belongs to the gamma type-C retroviral envelope protein family. HERV class-I FRD env subfamily. In terms of assembly, the surface and transmembrane proteins form a heterodimer. They are attached by non-covalent interactions or by a labile interchain disulfide bond. Post-translationally, specific enzymatic cleavages in vivo yield the mature SU and TM proteins. In terms of processing, the CXXC motif is highly conserved across a broad range of retroviral envelope proteins. It is thought to participate in the formation of a labile disulfide bond possibly with the CX6CC motif present in the transmembrane protein.

It is found in the cell membrane. This endogenous retroviral envelope protein has retained its original fusogenic properties and participates in trophoblast fusion and the formation of a syncytium during placenta morphogenesis. The interaction with MFSD2A is apparently important for this process. Functionally, endogenous envelope proteins may have kept, lost or modified their original function during evolution and this one is unable to confer infectivity. This chain is Syncytin-2 (ERVFRD-1), found in Hylobates moloch (Silvery gibbon).